Consider the following 191-residue polypeptide: Large ribosomal subunit protein uL6A (191 aa).

Belongs to the universal ribosomal protein uL6 family. As to quaternary structure, component of the large ribosomal subunit (LSU). Mature yeast ribosomes consist of a small (40S) and a large (60S) subunit. The 40S small subunit contains 1 molecule of ribosomal RNA (18S rRNA) and 33 different proteins (encoded by 57 genes). The large 60S subunit contains 3 rRNA molecules (25S, 5.8S and 5S rRNA) and 46 different proteins (encoded by 81 genes). uL6 lines the binding pocket for eukaryotic elongation factor 2 (eEF2).

The protein resides in the cytoplasm. Its function is as follows. Component of the ribosome, a large ribonucleoprotein complex responsible for the synthesis of proteins in the cell. The small ribosomal subunit (SSU) binds messenger RNAs (mRNAs) and translates the encoded message by selecting cognate aminoacyl-transfer RNA (tRNA) molecules. The large subunit (LSU) contains the ribosomal catalytic site termed the peptidyl transferase center (PTC), which catalyzes the formation of peptide bonds, thereby polymerizing the amino acids delivered by tRNAs into a polypeptide chain. The nascent polypeptides leave the ribosome through a tunnel in the LSU and interact with protein factors that function in enzymatic processing, targeting, and the membrane insertion of nascent chains at the exit of the ribosomal tunnel. The polypeptide is Large ribosomal subunit protein uL6A (Saccharomyces cerevisiae (strain ATCC 204508 / S288c) (Baker's yeast)).